We begin with the raw amino-acid sequence, 194 residues long: MTSFTVIGHTACTDASFPLDDLPGKGGRMDLLCRAVASSLFLSHGIREDTTCDIMLLGQPHPGRIIRFDGSALRSLSPDERNIASSIKRALAIPAGKTFREAGPGLLTRKGTLADQLSEKHYAVLDESGVDIRKVATEELPDAFLLSDNRNFSDDEMELIRDIPKYSLGPAIVHADHAIVLILNEIDRRRSGWI.

S-adenosyl-L-methionine is bound at residue leucine 125.

The protein belongs to the methyltransferase superfamily. TrmY family. Homodimer.

It localises to the cytoplasm. It catalyses the reaction pseudouridine(54) in tRNA + S-adenosyl-L-methionine = N(1)-methylpseudouridine(54) in tRNA + S-adenosyl-L-homocysteine + H(+). Specifically catalyzes the N1-methylation of pseudouridine at position 54 (Psi54) in tRNAs. This chain is tRNA (pseudouridine(54)-N(1))-methyltransferase, found in Methanospirillum hungatei JF-1 (strain ATCC 27890 / DSM 864 / NBRC 100397 / JF-1).